The sequence spans 256 residues: GDSL esterase/lipase At1g18120 (256 aa).

Positions 1–49 are cleaved as a signal peptide; that stretch reads MYRVYKNNKFILISIPRITNKLWQKNCNLVILLGVLLVLTLFHDPIIVA. Catalysis depends on Ser-67, which acts as the Nucleophile. Asn-181 is a glycosylation site (N-linked (GlcNAc...) asparagine).

It belongs to the 'GDSL' lipolytic enzyme family.

It is found in the secreted. The chain is GDSL esterase/lipase At1g18120 from Arabidopsis thaliana (Mouse-ear cress).